The chain runs to 291 residues: 4-hydroxybenzoate octaprenyltransferase (291 aa).

8 consecutive transmembrane segments (helical) span residues 23-43 (PIGT…AADG), 47-67 (PALV…GCAI), 98-118 (LAVA…LNAL), 139-159 (FFAI…PMAY), 171-191 (WLML…YAMV), 216-236 (IMLC…ALAL), 238-258 (AAYW…YTLL), and 267-287 (FFVF…AALA).

Belongs to the UbiA prenyltransferase family. The cofactor is Mg(2+).

It is found in the cell inner membrane. It catalyses the reaction all-trans-octaprenyl diphosphate + 4-hydroxybenzoate = 4-hydroxy-3-(all-trans-octaprenyl)benzoate + diphosphate. Its pathway is cofactor biosynthesis; ubiquinone biosynthesis. Catalyzes the prenylation of para-hydroxybenzoate (PHB) with an all-trans polyprenyl group. Mediates the second step in the final reaction sequence of ubiquinone-8 (UQ-8) biosynthesis, which is the condensation of the polyisoprenoid side chain with PHB, generating the first membrane-bound Q intermediate 3-octaprenyl-4-hydroxybenzoate. The chain is 4-hydroxybenzoate octaprenyltransferase from Ralstonia nicotianae (strain ATCC BAA-1114 / GMI1000) (Ralstonia solanacearum).